The sequence spans 133 residues: Small ribosomal subunit protein uS11 (133 aa).

The protein belongs to the universal ribosomal protein uS11 family. Part of the 30S ribosomal subunit. Interacts with proteins S7 and S18. Binds to IF-3.

In terms of biological role, located on the platform of the 30S subunit, it bridges several disparate RNA helices of the 16S rRNA. Forms part of the Shine-Dalgarno cleft in the 70S ribosome. In Brevibacillus brevis (strain 47 / JCM 6285 / NBRC 100599), this protein is Small ribosomal subunit protein uS11.